We begin with the raw amino-acid sequence, 113 residues long: Hydrogenase maturation factor HypA (113 aa).

H2 serves as a coordination point for Ni(2+). Zn(2+) contacts are provided by C73, C76, C89, and C92.

The protein belongs to the HypA/HybF family.

Its function is as follows. Involved in the maturation of [NiFe] hydrogenases. Required for nickel insertion into the metal center of the hydrogenase. The sequence is that of Hydrogenase maturation factor HypA from Albidiferax ferrireducens (strain ATCC BAA-621 / DSM 15236 / T118) (Rhodoferax ferrireducens).